Reading from the N-terminus, the 183-residue chain is MDIDPYKEFGATVELLSFLPSDFFPSVRDLLDTASALYREALESPEHCSPHHTALRQAILCWGELMTLATWVGVNLEDPASRDLVVSYVNTNMGLKFRQLLWFHISCLTFGRETVIEYLVSFGVWIRTPPAYRPPNAPILSTLPETTVVRRRGRSPRRRTPSPRRRRSQSPRRRRSQSRESQC.

The disordered stretch occupies residues 136 to 183; the sequence is NAPILSTLPETTVVRRRGRSPRRRTPSPRRRRSQSPRRRRSQSRESQC. Residues 149–176 are compositionally biased toward basic residues; sequence VRRRGRSPRRRTPSPRRRRSQSPRRRRS. A phosphoserine; by host mark is found at Ser-155, Ser-162, and Ser-170. Residues 155 to 161 form a 1; half-length repeat; it reads SPRRRTP. The 3 X 8 AA repeats of S-P-R-R-R-[PR]-S-Q stretch occupies residues 155–177; the sequence is SPRRRTPSPRRRRSQSPRRRRSQ. The short motif at 158-175 is the Bipartite nuclear localization signal element; it reads RRTPSPRRRRSQSPRRRR. 2 tandem repeats follow at residues 162–169 and 170–177. The RNA binding stretch occupies residues 177-183; it reads QSRESQC.

The protein belongs to the orthohepadnavirus core antigen family. In terms of assembly, homodimerizes, then multimerizes. Interacts with cytosol exposed regions of viral L glycoprotein present in the reticulum-to-Golgi compartment. Interacts with human FLNB. Phosphorylated form interacts with host importin alpha; this interaction depends on the exposure of the NLS, which itself depends upon genome maturation and/or phosphorylation of the capsid protein. Interacts with host NUP153. Post-translationally, phosphorylated by host SRPK1, SRPK2, and maybe protein kinase C or GAPDH. Phosphorylation is critical for pregenomic RNA packaging. Protein kinase C phosphorylation is stimulated by HBx protein and may play a role in transport of the viral genome to the nucleus at the late step during the viral replication cycle.

It localises to the virion. It is found in the host cytoplasm. Its function is as follows. Self assembles to form an icosahedral capsid. Most capsids appear to be large particles with an icosahedral symmetry of T=4 and consist of 240 copies of capsid protein, though a fraction forms smaller T=3 particles consisting of 180 capsid proteins. Entering capsids are transported along microtubules to the nucleus. Phosphorylation of the capsid is thought to induce exposure of nuclear localization signal in the C-terminal portion of the capsid protein that allows binding to the nuclear pore complex via the importin (karyopherin-) alpha and beta. Capsids are imported in intact form through the nuclear pore into the nuclear basket, where it probably binds NUP153. Only capsids that contain the mature viral genome can release the viral DNA and capsid protein into the nucleoplasm. Immature capsids get stuck in the basket. Capsids encapsulate the pre-genomic RNA and the P protein. Pre-genomic RNA is reverse-transcribed into DNA while the capsid is still in the cytoplasm. The capsid can then either be directed to the nucleus, providing more genomes for transcription, or bud through the endoplasmic reticulum to provide new virions. This is Capsid protein from Hepatitis B virus genotype D subtype ayw (isolate France/Tiollais/1979) (HBV-D).